We begin with the raw amino-acid sequence, 130 residues long: Albumin-1 F (130 aa).

An N-terminal signal peptide occupies residues 1-26; the sequence is MASVKLASLIVLFATLGMFLTKNVGA. Disulfide bonds link cysteine 29-cysteine 46, cysteine 33-cysteine 48, and cysteine 41-cysteine 58. Propeptides lie at residues 64–69 and 123–130; these read VFLRTN and LLKSVSTA.

The C-terminal glycine may be removed from PA1b.

In terms of biological role, PA1b binds to basic 7S globulin (BG) and stimulates its phosphorylation activity. Involved in the signal transduction system to regulate the growth and differentiation as a hormone peptide. Toxic to various insects through binding to a high affinity binding site in the insect gut. The protein is Albumin-1 F of Pisum sativum (Garden pea).